A 712-amino-acid polypeptide reads, in one-letter code: 1,4-alpha-glucan branching enzyme GlgB (712 aa).

The Nucleophile role is filled by D397. The active-site Proton donor is E450.

The protein belongs to the glycosyl hydrolase 13 family. GlgB subfamily. Monomer.

It catalyses the reaction Transfers a segment of a (1-&gt;4)-alpha-D-glucan chain to a primary hydroxy group in a similar glucan chain.. It participates in glycan biosynthesis; glycogen biosynthesis. Functionally, catalyzes the formation of the alpha-1,6-glucosidic linkages in glycogen by scission of a 1,4-alpha-linked oligosaccharide from growing alpha-1,4-glucan chains and the subsequent attachment of the oligosaccharide to the alpha-1,6 position. This Bradyrhizobium sp. (strain BTAi1 / ATCC BAA-1182) protein is 1,4-alpha-glucan branching enzyme GlgB.